The sequence spans 311 residues: MECKRARAYSSSANLGSGFDILSMAHTAFFDTVEICVETKNSENIVIESNSKIPLEPNRNSATYPLVRIMEERGIKASLRVKVIKGIPEGLGLGSSGASATAAVMAFSSLFNLNLSKEDLVRYAMYGEIASSGSPHPDNVAASVFGGVVSVVSVNPVKVVEIPLNYSFNILLFVPLNVHIEEKTKKAREMVPKTVKLSDYINNSRYISSLLIGFVKGERDLIRLGLNDEIVEKARLPLFPYYPKIKEIAIKYDAVGSCVSGAGPSILVLTDKMTDENKIAEEGTKTCNEFNVECEVIKAKIAGGVEVERRN.

88 to 98 (PEGLGLGSSGA) lines the ATP pocket.

This sequence belongs to the GHMP kinase family. Homoserine kinase subfamily.

Its subcellular location is the cytoplasm. The enzyme catalyses L-homoserine + ATP = O-phospho-L-homoserine + ADP + H(+). It participates in amino-acid biosynthesis; L-threonine biosynthesis; L-threonine from L-aspartate: step 4/5. Functionally, catalyzes the ATP-dependent phosphorylation of L-homoserine to L-homoserine phosphate. This is Homoserine kinase from Saccharolobus islandicus (strain L.S.2.15 / Lassen #1) (Sulfolobus islandicus).